Here is a 483-residue protein sequence, read N- to C-terminus: 5-hydroxytryptamine receptor 3A (483 aa).

The first 23 residues, 1–23, serve as a signal peptide directing secretion; the sequence is MPLCIPQVLLALFLSVLIAQGEG. At 24–246 the chain is on the extracellular side; that stretch reads SRRRATQAHS…MKFYVVIRRR (223 aa). 3 N-linked (GlcNAc...) asparagine glycosylation sites follow: N109, N175, and N191. An intrachain disulfide couples C162 to C176. A helical membrane pass occupies residues 247-273; it reads PLFYAVSLLLPSIFLMVVDIVGFCLPP. Residues 274–278 are Cytoplasmic-facing; the sequence is DSGER. The chain crosses the membrane as a helical span at residues 279 to 297; sequence VSFKITLLLGYSVFLIIVS. Residues 298 to 307 lie on the Extracellular side of the membrane; the sequence is DTLPATAIGT. A helical membrane pass occupies residues 308–326; the sequence is PLIGVYFVVCMALLVISLA. Residues 327–460 lie on the Cytoplasmic side of the membrane; sequence ETIFIVQLVH…GYVLDRLLFR (134 aa). Residues 393–414 form a disordered region; it reads VGSPQDLEKTSRSRDSPLPPPR. Positions 398-407 are enriched in basic and acidic residues; it reads DLEKTSRSRD. The tract at residues 419–455 is HA-stretch; determines single-channel conductance in 5-HT3 receptors; sequence AVRGLLQELSSIRHSLEKRDEMREVARDWLRVGYVLD. Residues 461–480 traverse the membrane as a helical segment; sequence IYLLAVLAYSITLVTLWSIW. The Extracellular segment spans residues 481-483; the sequence is HYS.

Belongs to the ligand-gated ion channel (TC 1.A.9) family. 5-hydroxytryptamine receptor (TC 1.A.9.2) subfamily. HTR3A sub-subfamily. Forms homopentameric as well as heteropentameric serotonin-activated cation-selective channel complexes with HTR3B or HTR3C or HTR3D or HTR3E. The homomeric complex is functional but exhibits low conductance with modified voltage dependence, and decreased agonist and antagonist affinity. Heteropentameric complexes display properties which resemble that of neuronal serotonin-activated channels in vivo. Interacts with RIC3. In terms of tissue distribution, expressed in central and peripheral neurons.

It localises to the postsynaptic cell membrane. The protein localises to the cell membrane. It carries out the reaction Na(+)(in) = Na(+)(out). It catalyses the reaction K(+)(in) = K(+)(out). The catalysed reaction is Ca(2+)(in) = Ca(2+)(out). The enzyme catalyses Mg(2+)(in) = Mg(2+)(out). In terms of biological role, forms serotonin (5-hydroxytryptamine/5-HT3)-activated cation-selective channel complexes, which when activated cause fast, depolarizing responses in neurons. The chain is 5-hydroxytryptamine receptor 3A from Rattus norvegicus (Rat).